We begin with the raw amino-acid sequence, 200 residues long: Small ribosomal subunit protein uS4 (200 aa).

The interval 20–41 (TGTGKELDKRPYAPGQHGPNQR) is disordered. The 61-residue stretch at 92 to 152 (SRLDNLVYRL…EKSKNLDVVK (61 aa)) folds into the S4 RNA-binding domain.

Belongs to the universal ribosomal protein uS4 family. Part of the 30S ribosomal subunit. Contacts protein S5. The interaction surface between S4 and S5 is involved in control of translational fidelity.

One of the primary rRNA binding proteins, it binds directly to 16S rRNA where it nucleates assembly of the body of the 30S subunit. In terms of biological role, with S5 and S12 plays an important role in translational accuracy. The protein is Small ribosomal subunit protein uS4 of Oceanobacillus iheyensis (strain DSM 14371 / CIP 107618 / JCM 11309 / KCTC 3954 / HTE831).